A 460-amino-acid polypeptide reads, in one-letter code: Solute carrier family 52, riboflavin transporter, member 3 (460 aa).

Over 1–6 (MAFLTH) the chain is Cytoplasmic. A helical transmembrane segment spans residues 7 to 27 (LLVCVFGMGSWVAINGLWVEL). At 28 to 37 (PLLVTELPEA) the chain is on the extracellular side. The chain crosses the membrane as a helical span at residues 38–58 (WYLPSYLTVVIQLANIGPLLV). The Cytoplasmic portion of the chain corresponds to 59–71 (TLMHRFRPGCLSE). A helical membrane pass occupies residues 72–92 (VPVIFLILCVGTAACILLAFL). Over 93–105 (WNVTSWIQGGQHS) the chain is Extracellular. An N-linked (GlcNAc...) asparagine glycan is attached at Asn94. Residues 106–126 (VAFIVLTFFLALVDCTSSVTF) traverse the membrane as a helical segment. The Cytoplasmic segment spans residues 127 to 137 (LPFMSQLPTYY). Residues 138 to 158 (LTTFFIGEGLSGLLPALVALV) traverse the membrane as a helical segment. The Extracellular portion of the chain corresponds to 159 to 211 (QGSGITTCVNVTETPGTTLNTMETPITQGNLSPSLPSPSWHQESRYLAPRFSP). Residue Asn168 is glycosylated (N-linked (GlcNAc...) asparagine). The helical transmembrane segment at 212-232 (LLFFLLLSFLTGCCLVAFFLL) threads the bilayer. Residues 233-291 (QRQPWGRQGSIEDLLHSQVTLHSIRPRDTEDTSSLGAPVSSPGKGSVEASVASLRPAQL) lie on the Cytoplasmic side of the membrane. 2 positions are modified to phosphoserine: Ser242 and Ser266. A helical membrane pass occupies residues 292 to 312 (AFIYSVVAFVNALTNGVLPSV). The Extracellular segment spans residues 313-326 (QTYSCLPYGPVAYH). A helical transmembrane segment spans residues 327–347 (LSATLSSVASPLACFLPIFLP). Topologically, residues 348 to 350 (NRS) are cytoplasmic. The helical transmembrane segment at 351 to 371 (LLFLGVLTVLGTGFGAYNMAM) threads the bilayer. Topologically, residues 372–387 (AAMSPCPVLQGHWGGE) are extracellular. Cys377 and Cys454 form a disulfide bridge. The chain crosses the membrane as a helical span at residues 388 to 408 (VLIVLSWVLFAACLSYVKVML). Residues 409–418 (GVILRDRSRS) are Cytoplasmic-facing. The helical transmembrane segment at 419–439 (ALLWCGAAVQLGSLIGALLMF) threads the bilayer. Over 440–460 (PLVNVLKLFSSADYCSLDCSV) the chain is Extracellular.

Belongs to the riboflavin transporter family. In terms of tissue distribution, within the small intestine, it is particularly expressed in the jujenum and the ileum. Almost negligible expression in the stomach, duodenum, and large intestine.

The protein localises to the cell membrane. The enzyme catalyses riboflavin(in) = riboflavin(out). Its function is as follows. Plasma membrane transporter mediating the uptake by cells of the water soluble vitamin B2/riboflavin that plays a key role in biochemical oxidation-reduction reactions of the carbohydrate, lipid, and amino acid metabolism. The sequence is that of Solute carrier family 52, riboflavin transporter, member 3 (Slc52a3) from Mus musculus (Mouse).